We begin with the raw amino-acid sequence, 284 residues long: Pantothenate synthetase (284 aa).

30 to 37 (MGNLHEGH) lines the ATP pocket. The Proton donor role is filled by His-37. A (R)-pantoate-binding site is contributed by Gln-61. Gln-61 is a beta-alanine binding site. 149-152 (GEKD) is a binding site for ATP. Position 155 (Gln-155) interacts with (R)-pantoate. Residues Val-178 and 186–189 (LSSR) each bind ATP.

The protein belongs to the pantothenate synthetase family. In terms of assembly, homodimer.

The protein resides in the cytoplasm. The catalysed reaction is (R)-pantoate + beta-alanine + ATP = (R)-pantothenate + AMP + diphosphate + H(+). It functions in the pathway cofactor biosynthesis; (R)-pantothenate biosynthesis; (R)-pantothenate from (R)-pantoate and beta-alanine: step 1/1. Functionally, catalyzes the condensation of pantoate with beta-alanine in an ATP-dependent reaction via a pantoyl-adenylate intermediate. This chain is Pantothenate synthetase, found in Yersinia enterocolitica serotype O:8 / biotype 1B (strain NCTC 13174 / 8081).